Here is a 213-residue protein sequence, read N- to C-terminus: Histone H1.2 (213 aa).

Residues M1–K17 are compositionally biased toward low complexity. The disordered stretch occupies residues M1–S41. S2 is modified (N-acetylserine; partial). S2 is modified (phosphoserine). An N6-acetyllysine modification is found at K17. N6-(2-hydroxyisobutyryl)lysine is present on residues K23, K26, and K27. An N6-(beta-hydroxybutyryl)lysine; alternate modification is found at K34. At K34 the chain carries N6-crotonyllysine; alternate. N6-methyllysine; alternate is present on K34. Residues S36–K109 form the H15 domain. The residue at position 46 (K46) is an N6-(2-hydroxyisobutyryl)lysine. The residue at position 52 (K52) is an N6-(beta-hydroxybutyryl)lysine; alternate. Residue K52 is modified to N6-(2-hydroxyisobutyryl)lysine; alternate. Position 54 is a citrulline (R54). The residue at position 63 (K63) is an N6-(2-hydroxyisobutyryl)lysine. Residue K64 is modified to N6-(beta-hydroxybutyryl)lysine; alternate. K64 bears the N6-crotonyllysine; alternate mark. N6-(2-hydroxyisobutyryl)lysine; alternate is present on K64. 2 positions are modified to N6-(2-hydroxyisobutyryl)lysine: K75 and K81. An N6-(beta-hydroxybutyryl)lysine; alternate mark is found at K85 and K90. N6-crotonyllysine; alternate is present on residues K85, K90, and K97. 3 positions are modified to N6-(2-hydroxyisobutyryl)lysine; alternate: K85, K90, and K97. A disordered region spans residues T92–K213. K97 carries the post-translational modification N6-succinyllysine; alternate. The residue at position 104 (S104) is a Phosphoserine; by PKC. N6-(beta-hydroxybutyryl)lysine is present on K106. N6-(2-hydroxyisobutyryl)lysine is present on residues K110, K117, K121, K129, and K136. A compositionally biased stretch (basic residues) spans K119–K140. T146 carries the phosphothreonine modification. Position 148 is an N6-(2-hydroxyisobutyryl)lysine (K148). Over residues K149–K160 the composition is skewed to basic residues. Residues K159 and K168 each carry the N6-crotonyllysine; alternate modification. An N6-(2-hydroxyisobutyryl)lysine; alternate mark is found at K159 and K168. A compositionally biased stretch (basic residues) spans K169–A186. K187 is modified (N6-methyllysine; by EHMT1 and EHMT2). ADP-ribosylserine is present on S188. Positions V193–K213 are enriched in basic residues. N6-(2-hydroxyisobutyryl)lysine is present on K213.

This sequence belongs to the histone H1/H5 family. Interacts with TSC22D1 isoforms 2 and 5. Post-translationally, H1 histones are progressively phosphorylated during the cell cycle, becoming maximally phosphorylated during late G2 phase and M phase, and being dephosphorylated sharply thereafter. In terms of processing, crotonylation (Kcr) is specifically present in male germ cells and marks testis-specific genes in post-meiotic cells, including X-linked genes that escape sex chromosome inactivation in haploid cells. Crotonylation marks active promoters and enhancers and confers resistance to transcriptional repressors. It is also associated with post-meiotically activated genes on autosomes. Citrullination at Arg-54 (H1R54ci) by PADI4 takes place within the DNA-binding site of H1 and results in its displacement from chromatin and global chromatin decondensation, thereby promoting pluripotency and stem cell maintenance. Post-translationally, ADP-ribosylated on Ser-188 in response to DNA damage.

The protein resides in the nucleus. The protein localises to the chromosome. In terms of biological role, histone H1 protein binds to linker DNA between nucleosomes forming the macromolecular structure known as the chromatin fiber. Histones H1 are necessary for the condensation of nucleosome chains into higher-order structured fibers. Also acts as a regulator of individual gene transcription through chromatin remodeling, nucleosome spacing and DNA methylation. This is Histone H1.2 from Homo sapiens (Human).